The primary structure comprises 354 residues: Methionine import ATP-binding protein MetN (354 aa).

One can recognise an ABC transporter domain in the interval 8–250 (LDHIDITFHQ…PKEALTQEFI (243 aa)). 42 to 49 (GYSGAGKS) contacts ATP.

This sequence belongs to the ABC transporter superfamily. Methionine importer (TC 3.A.1.24) family. The complex is composed of two ATP-binding proteins (MetN), two transmembrane proteins (MetI) and a solute-binding protein (MetQ).

Its subcellular location is the cell membrane. It carries out the reaction L-methionine(out) + ATP + H2O = L-methionine(in) + ADP + phosphate + H(+). The catalysed reaction is D-methionine(out) + ATP + H2O = D-methionine(in) + ADP + phosphate + H(+). Part of the ABC transporter complex MetNIQ involved in methionine import. Responsible for energy coupling to the transport system. The sequence is that of Methionine import ATP-binding protein MetN from Streptococcus pyogenes serotype M4 (strain MGAS10750).